The chain runs to 70 residues: Large ribosomal subunit protein bL31 (70 aa).

Residues Cys-16, Cys-18, Cys-37, and Cys-40 each coordinate Zn(2+).

Belongs to the bacterial ribosomal protein bL31 family. Type A subfamily. Part of the 50S ribosomal subunit. Zn(2+) is required as a cofactor.

Functionally, binds the 23S rRNA. The chain is Large ribosomal subunit protein bL31 from Shewanella woodyi (strain ATCC 51908 / MS32).